A 356-amino-acid polypeptide reads, in one-letter code: Biotin synthase (356 aa).

A disordered region spans residues 1–28 (MTIQANVPTGDETSDEASRQTSNEASSE). One can recognise a Radical SAM core domain in the interval 77 to 302 (EDVEVEGIIS…RTVLRYAGGR (226 aa)). Residues Cys-92, Cys-96, and Cys-99 each coordinate [4Fe-4S] cluster. Positions 135, 168, 227, and 297 each coordinate [2Fe-2S] cluster.

The protein belongs to the radical SAM superfamily. Biotin synthase family. In terms of assembly, homodimer. It depends on [4Fe-4S] cluster as a cofactor. [2Fe-2S] cluster serves as cofactor.

The catalysed reaction is (4R,5S)-dethiobiotin + (sulfur carrier)-SH + 2 reduced [2Fe-2S]-[ferredoxin] + 2 S-adenosyl-L-methionine = (sulfur carrier)-H + biotin + 2 5'-deoxyadenosine + 2 L-methionine + 2 oxidized [2Fe-2S]-[ferredoxin]. It participates in cofactor biosynthesis; biotin biosynthesis; biotin from 7,8-diaminononanoate: step 2/2. In terms of biological role, catalyzes the conversion of dethiobiotin (DTB) to biotin by the insertion of a sulfur atom into dethiobiotin via a radical-based mechanism. This is Biotin synthase from Arthrobacter sp. (strain FB24).